The following is a 192-amino-acid chain: uncharacterized protein (192 aa).

Residues 29 to 160 enclose the Nudix hydrolase domain; the sequence is QRQAAVLVPV…PLDIHRRGNH (132 aa). Residues 67-89 carry the Nudix box motif; the sequence is GAVDDTDASLIAAALREAQEEVA. Residues Glu-83 and Glu-87 each contribute to the Mg(2+) site.

The protein belongs to the Nudix hydrolase family. PCD1 subfamily. The cofactor is Mn(2+). Requires Mg(2+) as cofactor.

In terms of biological role, probably mediates the hydrolysis of some nucleoside diphosphate derivatives. This is an uncharacterized protein from Cronobacter sakazakii (strain ATCC BAA-894) (Enterobacter sakazakii).